We begin with the raw amino-acid sequence, 673 residues long: DNA ligase (673 aa).

NAD(+) contacts are provided by residues 35 to 39, 84 to 85, and Glu115; these read DADYD and SL. Lys117 (N6-AMP-lysine intermediate) is an active-site residue. Arg138, Glu180, Lys296, and Lys320 together coordinate NAD(+). Residues Cys415, Cys418, Cys433, and Cys438 each coordinate Zn(2+). The BRCT domain maps to 595 to 673; that stretch reads ERGTALAGQT…EDALKKLLGK (79 aa).

The protein belongs to the NAD-dependent DNA ligase family. LigA subfamily. Mg(2+) serves as cofactor. It depends on Mn(2+) as a cofactor.

It carries out the reaction NAD(+) + (deoxyribonucleotide)n-3'-hydroxyl + 5'-phospho-(deoxyribonucleotide)m = (deoxyribonucleotide)n+m + AMP + beta-nicotinamide D-nucleotide.. In terms of biological role, DNA ligase that catalyzes the formation of phosphodiester linkages between 5'-phosphoryl and 3'-hydroxyl groups in double-stranded DNA using NAD as a coenzyme and as the energy source for the reaction. It is essential for DNA replication and repair of damaged DNA. This Koribacter versatilis (strain Ellin345) protein is DNA ligase.